A 487-amino-acid polypeptide reads, in one-letter code: Protein nucleotidyltransferase YdiU (487 aa).

8 residues coordinate ATP: Gly-90, Gly-92, Arg-93, Lys-113, Asp-125, Gly-126, Arg-176, and Arg-183. Asp-252 functions as the Proton acceptor in the catalytic mechanism. Mg(2+)-binding residues include Asn-253 and Asp-262. An ATP-binding site is contributed by Asp-262.

It belongs to the SELO family. Mg(2+) is required as a cofactor. Requires Mn(2+) as cofactor.

The enzyme catalyses L-seryl-[protein] + ATP = 3-O-(5'-adenylyl)-L-seryl-[protein] + diphosphate. It catalyses the reaction L-threonyl-[protein] + ATP = 3-O-(5'-adenylyl)-L-threonyl-[protein] + diphosphate. The catalysed reaction is L-tyrosyl-[protein] + ATP = O-(5'-adenylyl)-L-tyrosyl-[protein] + diphosphate. It carries out the reaction L-histidyl-[protein] + UTP = N(tele)-(5'-uridylyl)-L-histidyl-[protein] + diphosphate. The enzyme catalyses L-seryl-[protein] + UTP = O-(5'-uridylyl)-L-seryl-[protein] + diphosphate. It catalyses the reaction L-tyrosyl-[protein] + UTP = O-(5'-uridylyl)-L-tyrosyl-[protein] + diphosphate. In terms of biological role, nucleotidyltransferase involved in the post-translational modification of proteins. It can catalyze the addition of adenosine monophosphate (AMP) or uridine monophosphate (UMP) to a protein, resulting in modifications known as AMPylation and UMPylation. The chain is Protein nucleotidyltransferase YdiU from Pseudomonas fluorescens (strain ATCC BAA-477 / NRRL B-23932 / Pf-5).